The primary structure comprises 310 residues: ADP-L-glycero-D-manno-heptose-6-epimerase (310 aa).

Residues 10-11 (FI), 31-32 (DN), Lys38, Lys53, 75-79 (EGACS), and Asn92 each bind NADP(+). The active-site Proton acceptor is Tyr140. Lys144 is an NADP(+) binding site. Asn169 is a binding site for substrate. NADP(+)-binding residues include Val170 and Lys178. The Proton acceptor role is filled by Lys178. Residues Ser180, His187, 201 to 204 (FEGS), Arg209, and Tyr272 each bind substrate.

It belongs to the NAD(P)-dependent epimerase/dehydratase family. HldD subfamily. In terms of assembly, homopentamer. It depends on NADP(+) as a cofactor.

It catalyses the reaction ADP-D-glycero-beta-D-manno-heptose = ADP-L-glycero-beta-D-manno-heptose. It functions in the pathway nucleotide-sugar biosynthesis; ADP-L-glycero-beta-D-manno-heptose biosynthesis; ADP-L-glycero-beta-D-manno-heptose from D-glycero-beta-D-manno-heptose 7-phosphate: step 4/4. Catalyzes the interconversion between ADP-D-glycero-beta-D-manno-heptose and ADP-L-glycero-beta-D-manno-heptose via an epimerization at carbon 6 of the heptose. This Klebsiella pneumoniae (strain 342) protein is ADP-L-glycero-D-manno-heptose-6-epimerase.